We begin with the raw amino-acid sequence, 155 residues long: Endoribonuclease YbeY (155 aa).

3 residues coordinate Zn(2+): histidine 114, histidine 118, and histidine 124.

This sequence belongs to the endoribonuclease YbeY family. The cofactor is Zn(2+).

Its subcellular location is the cytoplasm. Its function is as follows. Single strand-specific metallo-endoribonuclease involved in late-stage 70S ribosome quality control and in maturation of the 3' terminus of the 16S rRNA. The protein is Endoribonuclease YbeY of Buchnera aphidicola subsp. Acyrthosiphon pisum (strain APS) (Acyrthosiphon pisum symbiotic bacterium).